Here is a 196-residue protein sequence, read N- to C-terminus: ATP-dependent Clp protease proteolytic subunit (196 aa).

Ser-101 acts as the Nucleophile in catalysis. His-126 is a catalytic residue.

This sequence belongs to the peptidase S14 family. Component of the chloroplastic Clp protease core complex.

The protein resides in the plastid. The protein localises to the chloroplast stroma. The catalysed reaction is Hydrolysis of proteins to small peptides in the presence of ATP and magnesium. alpha-casein is the usual test substrate. In the absence of ATP, only oligopeptides shorter than five residues are hydrolyzed (such as succinyl-Leu-Tyr-|-NHMec, and Leu-Tyr-Leu-|-Tyr-Trp, in which cleavage of the -Tyr-|-Leu- and -Tyr-|-Trp bonds also occurs).. In terms of biological role, cleaves peptides in various proteins in a process that requires ATP hydrolysis. Has a chymotrypsin-like activity. Plays a major role in the degradation of misfolded proteins. The polypeptide is ATP-dependent Clp protease proteolytic subunit (Morus indica (Mulberry)).